Reading from the N-terminus, the 179-residue chain is uncharacterized protein (179 aa).

The first 19 residues, M1–A19, serve as a signal peptide directing secretion. Residue C20 is the site of N-palmitoyl cysteine attachment. A lipid anchor (S-diacylglycerol cysteine) is attached at C20.

The protein resides in the cell membrane. This is an uncharacterized protein from Escherichia coli (strain K12).